The primary structure comprises 170 residues: 6,7-dimethyl-8-ribityllumazine synthase 2 (170 aa).

Residues Trp25, 59-61 (AFE), and 83-85 (LVV) contribute to the 5-amino-6-(D-ribitylamino)uracil site. Arg91 serves as the catalytic Proton donor. Ser116 serves as a coordination point for 5-amino-6-(D-ribitylamino)uracil. His130 provides a ligand contact to (2S)-2-hydroxy-3-oxobutyl phosphate.

This sequence belongs to the DMRL synthase family. In terms of assembly, forms an icosahedral capsid composed of 60 subunits, arranged as a dodecamer of pentamers.

It carries out the reaction (2S)-2-hydroxy-3-oxobutyl phosphate + 5-amino-6-(D-ribitylamino)uracil = 6,7-dimethyl-8-(1-D-ribityl)lumazine + phosphate + 2 H2O + H(+). It participates in cofactor biosynthesis; riboflavin biosynthesis; riboflavin from 2-hydroxy-3-oxobutyl phosphate and 5-amino-6-(D-ribitylamino)uracil: step 1/2. Functionally, catalyzes the formation of 6,7-dimethyl-8-ribityllumazine by condensation of 5-amino-6-(D-ribitylamino)uracil with 3,4-dihydroxy-2-butanone 4-phosphate. This is the penultimate step in the biosynthesis of riboflavin. This Pseudomonas syringae pv. tomato (strain ATCC BAA-871 / DC3000) protein is 6,7-dimethyl-8-ribityllumazine synthase 2.